We begin with the raw amino-acid sequence, 224 residues long: 3-dehydroquinate dehydratase (224 aa).

3-dehydroquinate contacts are provided by residues 30–32 and arginine 62; that span reads EWR. Histidine 118 (proton donor/acceptor) is an active-site residue. Residue lysine 143 is the Schiff-base intermediate with substrate of the active site. The 3-dehydroquinate site is built by arginine 186, serine 205, and glutamine 209.

The protein belongs to the type-I 3-dehydroquinase family. As to quaternary structure, homodimer.

It carries out the reaction 3-dehydroquinate = 3-dehydroshikimate + H2O. The protein operates within metabolic intermediate biosynthesis; chorismate biosynthesis; chorismate from D-erythrose 4-phosphate and phosphoenolpyruvate: step 3/7. In terms of biological role, involved in the third step of the chorismate pathway, which leads to the biosynthesis of aromatic amino acids. Catalyzes the cis-dehydration of 3-dehydroquinate (DHQ) and introduces the first double bond of the aromatic ring to yield 3-dehydroshikimate. The protein is 3-dehydroquinate dehydratase of Streptococcus suis (strain 98HAH33).